We begin with the raw amino-acid sequence, 93 residues long: Small ribosomal subunit protein uS19m (93 aa).

The protein belongs to the universal ribosomal protein uS19 family. Component of the mitochondrial small ribosomal subunit (mt-SSU). Mature yeast 74S mitochondrial ribosomes consist of a small (37S) and a large (54S) subunit. The 37S small subunit contains a 15S ribosomal RNA (15S mt-rRNA) and at least 32 different proteins. The 54S large subunit contains a 21S rRNA (21S mt-rRNA) and at least 45 different proteins.

The protein localises to the mitochondrion. Its function is as follows. Component of the mitochondrial ribosome (mitoribosome), a dedicated translation machinery responsible for the synthesis of mitochondrial genome-encoded proteins, including at least some of the essential transmembrane subunits of the mitochondrial respiratory chain. The mitoribosomes are attached to the mitochondrial inner membrane and translation products are cotranslationally integrated into the membrane. In Schizosaccharomyces pombe (strain 972 / ATCC 24843) (Fission yeast), this protein is Small ribosomal subunit protein uS19m (rsm19).